Here is a 440-residue protein sequence, read N- to C-terminus: Adenylosuccinate synthetase (440 aa).

GTP-binding positions include glycine 14–lysine 20 and glycine 42–threonine 44. Aspartate 15 functions as the Proton acceptor in the catalytic mechanism. Residues aspartate 15 and glycine 42 each coordinate Mg(2+). IMP is bound by residues aspartate 15–lysine 18, asparagine 40–histidine 43, threonine 131, arginine 145, glutamine 226, threonine 241, and arginine 313. Histidine 43 (proton donor) is an active-site residue. Alanine 309–arginine 315 is a substrate binding site. Residues arginine 315, lysine 341–aspartate 343, and serine 423–glycine 425 each bind GTP.

Belongs to the adenylosuccinate synthetase family. Homodimer. Requires Mg(2+) as cofactor.

The protein localises to the cytoplasm. The enzyme catalyses IMP + L-aspartate + GTP = N(6)-(1,2-dicarboxyethyl)-AMP + GDP + phosphate + 2 H(+). It functions in the pathway purine metabolism; AMP biosynthesis via de novo pathway; AMP from IMP: step 1/2. Its function is as follows. Plays an important role in the de novo pathway of purine nucleotide biosynthesis. Catalyzes the first committed step in the biosynthesis of AMP from IMP. In Hydrogenovibrio crunogenus (strain DSM 25203 / XCL-2) (Thiomicrospira crunogena), this protein is Adenylosuccinate synthetase.